We begin with the raw amino-acid sequence, 314 residues long: Dihydroorotate dehydrogenase (fumarate) (314 aa).

Residues lysine 46, 70-74 (NSMGL), and asparagine 130 contribute to the substrate site. 46 to 47 (KS) contacts FMN. Position 130 (asparagine 130) interacts with FMN. Residues serine 132 and cysteine 133 each act as nucleophile in the active site. 2 residues coordinate FMN: lysine 167 and isoleucine 195. 196-197 (NS) is a substrate binding site. FMN contacts are provided by residues glycine 224, 252–253 (GG), and 274–275 (GT).

Belongs to the dihydroorotate dehydrogenase family. Type 1 subfamily. Homodimer. FMN serves as cofactor.

It is found in the cytoplasm. It carries out the reaction (S)-dihydroorotate + fumarate = orotate + succinate. It participates in pyrimidine metabolism; UMP biosynthesis via de novo pathway. The activity is independent of the presence of oxygen. Its function is as follows. Catalyzes the conversion of dihydroorotate to orotate with fumarate as the electron acceptor. In Lachancea kluyveri (strain ATCC 58438 / CBS 3082 / BCRC 21498 / NBRC 1685 / JCM 7257 / NCYC 543 / NRRL Y-12651) (Yeast), this protein is Dihydroorotate dehydrogenase (fumarate) (URA1).